A 671-amino-acid chain; its full sequence is DNA ligase (671 aa).

NAD(+) is bound by residues aspartate 32 to aspartate 36, serine 81 to leucine 82, and glutamate 113. The active-site N6-AMP-lysine intermediate is lysine 115. NAD(+) is bound by residues arginine 136, glutamate 173, lysine 290, and lysine 314. The Zn(2+) site is built by cysteine 408, cysteine 411, cysteine 426, and cysteine 432. One can recognise a BRCT domain in the interval glutamate 593 to serine 671.

Belongs to the NAD-dependent DNA ligase family. LigA subfamily. It depends on Mg(2+) as a cofactor. Mn(2+) is required as a cofactor.

The enzyme catalyses NAD(+) + (deoxyribonucleotide)n-3'-hydroxyl + 5'-phospho-(deoxyribonucleotide)m = (deoxyribonucleotide)n+m + AMP + beta-nicotinamide D-nucleotide.. In terms of biological role, DNA ligase that catalyzes the formation of phosphodiester linkages between 5'-phosphoryl and 3'-hydroxyl groups in double-stranded DNA using NAD as a coenzyme and as the energy source for the reaction. It is essential for DNA replication and repair of damaged DNA. In Escherichia coli O17:K52:H18 (strain UMN026 / ExPEC), this protein is DNA ligase.